Here is a 247-residue protein sequence, read N- to C-terminus: Ribose-5-phosphate isomerase (247 aa).

The protein belongs to the ribose 5-phosphate isomerase family.

Its subcellular location is the cytoplasm. The catalysed reaction is aldehydo-D-ribose 5-phosphate = D-ribulose 5-phosphate. It participates in carbohydrate degradation; pentose phosphate pathway; D-ribose 5-phosphate from D-ribulose 5-phosphate (non-oxidative stage): step 1/1. This is Ribose-5-phosphate isomerase (RKI1) from Meyerozyma guilliermondii (strain ATCC 6260 / CBS 566 / DSM 6381 / JCM 1539 / NBRC 10279 / NRRL Y-324) (Yeast).